Here is a 382-residue protein sequence, read N- to C-terminus: Carbamoyl phosphate synthase small chain (382 aa).

Residues 1 to 189 (MIKSALLVLE…ELPAAKNESE (189 aa)) are CPSase. L-glutamine is bound by residues serine 47, glycine 241, and glycine 243. One can recognise a Glutamine amidotransferase type-1 domain in the interval 193–380 (HVVAYDYGVK…IDLIQTYRSS (188 aa)). The Nucleophile role is filled by cysteine 269. 5 residues coordinate L-glutamine: leucine 270, glutamine 273, asparagine 311, glycine 313, and phenylalanine 314. Catalysis depends on residues histidine 353 and glutamate 355.

It belongs to the CarA family. As to quaternary structure, composed of two chains; the small (or glutamine) chain promotes the hydrolysis of glutamine to ammonia, which is used by the large (or ammonia) chain to synthesize carbamoyl phosphate. Tetramer of heterodimers (alpha,beta)4.

It carries out the reaction hydrogencarbonate + L-glutamine + 2 ATP + H2O = carbamoyl phosphate + L-glutamate + 2 ADP + phosphate + 2 H(+). The enzyme catalyses L-glutamine + H2O = L-glutamate + NH4(+). Its pathway is amino-acid biosynthesis; L-arginine biosynthesis; carbamoyl phosphate from bicarbonate: step 1/1. It functions in the pathway pyrimidine metabolism; UMP biosynthesis via de novo pathway; (S)-dihydroorotate from bicarbonate: step 1/3. In terms of biological role, small subunit of the glutamine-dependent carbamoyl phosphate synthetase (CPSase). CPSase catalyzes the formation of carbamoyl phosphate from the ammonia moiety of glutamine, carbonate, and phosphate donated by ATP, constituting the first step of 2 biosynthetic pathways, one leading to arginine and/or urea and the other to pyrimidine nucleotides. The small subunit (glutamine amidotransferase) binds and cleaves glutamine to supply the large subunit with the substrate ammonia. The protein is Carbamoyl phosphate synthase small chain of Pectobacterium atrosepticum (strain SCRI 1043 / ATCC BAA-672) (Erwinia carotovora subsp. atroseptica).